Consider the following 396-residue polypeptide: Elongation factor Tu (396 aa).

The tr-type G domain occupies 10–206 (KPHVNVGTIG…VLDTYIPEPE (197 aa)). Residues 19–26 (GHVDHGKT) are G1. 19–26 (GHVDHGKT) provides a ligand contact to GTP. Residue Thr26 participates in Mg(2+) binding. The interval 60–64 (GITIN) is G2. The tract at residues 81–84 (DCPG) is G3. GTP contacts are provided by residues 81–85 (DCPGH) and 136–139 (NKCD). A G4 region spans residues 136-139 (NKCD). A G5 region spans residues 174-176 (SAT).

It belongs to the TRAFAC class translation factor GTPase superfamily. Classic translation factor GTPase family. EF-Tu/EF-1A subfamily. In terms of assembly, monomer.

The protein localises to the cytoplasm. It catalyses the reaction GTP + H2O = GDP + phosphate + H(+). Functionally, GTP hydrolase that promotes the GTP-dependent binding of aminoacyl-tRNA to the A-site of ribosomes during protein biosynthesis. The chain is Elongation factor Tu from Psychrobacter arcticus (strain DSM 17307 / VKM B-2377 / 273-4).